Reading from the N-terminus, the 393-residue chain is Phosphatidate cytidylyltransferase (393 aa).

The next 8 membrane-spanning stretches (helical) occupy residues 49 to 69 (NFFR…WISV), 73 to 93 (IYSF…IIGI), 108 to 128 (IILG…IMMM), 141 to 161 (LSFV…ASLR), 171 to 191 (LFAL…CAIF), 198 to 218 (FWFV…YVVG), 237 to 257 (GFIG…HLHV), and 290 to 310 (IHII…GFLA).

Belongs to the CDS family.

It localises to the membrane. It catalyses the reaction a 1,2-diacyl-sn-glycero-3-phosphate + CTP + H(+) = a CDP-1,2-diacyl-sn-glycerol + diphosphate. The protein operates within phospholipid metabolism; CDP-diacylglycerol biosynthesis; CDP-diacylglycerol from sn-glycerol 3-phosphate: step 3/3. This chain is Phosphatidate cytidylyltransferase (CDS1), found in Encephalitozoon cuniculi (strain GB-M1) (Microsporidian parasite).